Consider the following 118-residue polypeptide: Sarafotoxin-i1 (118 aa).

The signal sequence occupies residues 1-23 (MALLPRLAAGGLLLLLALAALDG). Positions 24-84 (KPAPPKLLQK…LSPLRKPQPL (61 aa)) are excised as a propeptide. 2 disulfide bridges follow: cysteine 85-cysteine 99 and cysteine 87-cysteine 95. The propeptide occupies 112–118 (PSPIQSS).

The protein belongs to the endothelin/sarafotoxin family. Post-translationally, different length molecules ranging from 15 (85-99) to 30 amino acids (85-114) have been found in the venom. In terms of tissue distribution, expressed by the venom gland.

The protein resides in the secreted. Its function is as follows. Vasoconstrictor activity. These toxins cause cardiac arrest probably as a result of coronary vasospasm. Sarafotoxin-i3: vasoconstrictor activity. Causes cardiac arrest probably as a result of coronary vasospasm. Displays low agonistic activities towards endothelin-2 receptor (EDNRB) (displays affinity in the micromolar range). This chain is Sarafotoxin-i1, found in Atractaspis irregularis (Variable burrowing asp).